The chain runs to 308 residues: Staphylococcal superantigen-like 4 (308 aa).

The first 30 residues, 1-30 (MKITTIAKTSLALGLLTTGVITTTTQAANA), serve as a signal peptide directing secretion. The segment at 32-117 (TLSSTKVEAP…TTKQVPTEIN (86 aa)) is disordered. Composition is skewed to polar residues over residues 33–47 (LSSTKVEAPQSTPPS) and 55–76 (SKPNATTPPSTKVEAPQQTANA). The span at 77 to 93 (TTPPSTKVTTPPSTNTP) shows a compositional bias: low complexity. Residues 94–114 (QPMQSTKSDTPQSPTTKQVPT) are compositionally biased toward polar residues. Positions 180–278 (VDVFVVLEEN…VIKMKNGGKY (99 aa)) are sialyl Lewis X-binding.

This sequence belongs to the staphylococcal/streptococcal toxin family.

It is found in the secreted. In terms of biological role, secreted protein that plays a role in immune innate response inhibition by interfering with host TLR2-mediated pathway. The chain is Staphylococcal superantigen-like 4 from Staphylococcus aureus (strain NCTC 8325 / PS 47).